The following is a 517-amino-acid chain: GMP synthase [glutamine-hydrolyzing] (517 aa).

The region spanning 9–199 (RILILDFGSQ…VLGVCGCERL (191 aa)) is the Glutamine amidotransferase type-1 domain. Residue Cys86 is the Nucleophile of the active site. Catalysis depends on residues His173 and Glu175. One can recognise a GMPS ATP-PPase domain in the interval 200–392 (WTSESIIEDA…LGLPYNMLYR (193 aa)). ATP is bound at residue 227 to 233 (SGGVDSS).

Homodimer.

It carries out the reaction XMP + L-glutamine + ATP + H2O = GMP + L-glutamate + AMP + diphosphate + 2 H(+). The protein operates within purine metabolism; GMP biosynthesis; GMP from XMP (L-Gln route): step 1/1. Catalyzes the synthesis of GMP from XMP. The polypeptide is GMP synthase [glutamine-hydrolyzing] (Vibrio parahaemolyticus serotype O3:K6 (strain RIMD 2210633)).